The sequence spans 246 residues: Metallo-beta-lactamase type 2 (246 aa).

The N-terminal stretch at 1–20 (MKKLFVLCVCFFCSITAAGA) is a signal peptide. Residues histidine 95, histidine 97, aspartate 99, histidine 157, and cysteine 176 each contribute to the Zn(2+) site. Residue aspartate 99 participates in a beta-lactam binding. Lysine 179 and asparagine 185 together coordinate a beta-lactam. Position 215 (histidine 215) interacts with Zn(2+).

Belongs to the metallo-beta-lactamase superfamily. Class-B beta-lactamase family. Monomer. Zn(2+) is required as a cofactor.

It localises to the periplasm. It carries out the reaction a beta-lactam + H2O = a substituted beta-amino acid. Confers resistance to the different beta-lactam antibiotics (penicillin, cephalosporin and carbapenem) via the hydrolysis of the beta-lactam ring. Exhibits higher catalytic efficiency toward ticarcillin and piperacillin than blaIMP-1. Exhibits catalytic activity for carbapenem compounds, but has a preference for imipenem and ertapenem over meropenem. Has high efficiency for the hydrolysis of cefuroxime. Exhibits hydrolysis of all cephalosporins tested. Exhibits no hydrolysis of temocillin, the 6-alpha-methoxy semisynthetic derivative of ticarcillin. This chain is Metallo-beta-lactamase type 2, found in Pseudomonas aeruginosa.